A 476-amino-acid chain; its full sequence is Ribulose bisphosphate carboxylase large chain (476 aa).

A propeptide spanning residues 1 to 2 (MS) is cleaved from the precursor. An N-acetylproline modification is found at Pro3. An N6,N6,N6-trimethyllysine modification is found at Lys14. The substrate site is built by Asn123 and Thr173. Lys175 acts as the Proton acceptor in catalysis. Residue Lys177 coordinates substrate. 3 residues coordinate Mg(2+): Lys201, Asp203, and Glu204. At Lys201 the chain carries N6-carboxylysine. Catalysis depends on His294, which acts as the Proton acceptor. Substrate contacts are provided by Arg295, His327, and Ser379.

This sequence belongs to the RuBisCO large chain family. Type I subfamily. Heterohexadecamer of 8 large chains and 8 small chains; disulfide-linked. The disulfide link is formed within the large subunit homodimers. Mg(2+) serves as cofactor. The disulfide bond which can form in the large chain dimeric partners within the hexadecamer appears to be associated with oxidative stress and protein turnover.

Its subcellular location is the plastid. It localises to the chloroplast. The catalysed reaction is 2 (2R)-3-phosphoglycerate + 2 H(+) = D-ribulose 1,5-bisphosphate + CO2 + H2O. It catalyses the reaction D-ribulose 1,5-bisphosphate + O2 = 2-phosphoglycolate + (2R)-3-phosphoglycerate + 2 H(+). In terms of biological role, ruBisCO catalyzes two reactions: the carboxylation of D-ribulose 1,5-bisphosphate, the primary event in carbon dioxide fixation, as well as the oxidative fragmentation of the pentose substrate in the photorespiration process. Both reactions occur simultaneously and in competition at the same active site. This Brachypodium distachyon (Purple false brome) protein is Ribulose bisphosphate carboxylase large chain.